The chain runs to 130 residues: MAENQYYGTGRRKSSTARVFIKAGSGKIVINQRSLEQYFGRPTARMVVRQPLELVEMTEKLDLYITVNGGGISGQAGAIRHGITRALMQYDETLRAELRKAGFVTRDARKVERKKVGLHKARKRPQYSKR.

The protein belongs to the universal ribosomal protein uS9 family.

The polypeptide is Small ribosomal subunit protein uS9 (Aeromonas salmonicida (strain A449)).